The following is a 688-amino-acid chain: Homoaconitase, mitochondrial (688 aa).

A mitochondrion-targeting transit peptide spans methionine 1–cysteine 19. 3 residues coordinate [4Fe-4S] cluster: cysteine 346, cysteine 406, and cysteine 409.

The protein belongs to the aconitase/IPM isomerase family. It depends on [4Fe-4S] cluster as a cofactor.

The protein resides in the mitochondrion. The catalysed reaction is (2R,3S)-homoisocitrate = cis-homoaconitate + H2O. It functions in the pathway amino-acid biosynthesis; L-lysine biosynthesis via AAA pathway; L-alpha-aminoadipate from 2-oxoglutarate: step 3/5. Functionally, catalyzes the reversible hydration of cis-homoaconitate to (2R,3S)-homoisocitrate, a step in the alpha-aminoadipate pathway for lysine biosynthesis. The protein is Homoaconitase, mitochondrial (LYS4) of Debaryomyces hansenii (strain ATCC 36239 / CBS 767 / BCRC 21394 / JCM 1990 / NBRC 0083 / IGC 2968) (Yeast).